A 211-amino-acid chain; its full sequence is Uracil phosphoribosyltransferase (211 aa).

Lysine 30–arginine 34 serves as a coordination point for GTP. 5-phospho-alpha-D-ribose 1-diphosphate is bound by residues arginine 79, arginine 104, and aspartate 133–threonine 141. Uracil-binding positions include isoleucine 197 and glycine 202–alanine 204. Aspartate 203 serves as a coordination point for 5-phospho-alpha-D-ribose 1-diphosphate.

It belongs to the UPRTase family. Requires Mg(2+) as cofactor.

It catalyses the reaction UMP + diphosphate = 5-phospho-alpha-D-ribose 1-diphosphate + uracil. It functions in the pathway pyrimidine metabolism; UMP biosynthesis via salvage pathway; UMP from uracil: step 1/1. With respect to regulation, allosterically activated by GTP. In terms of biological role, catalyzes the conversion of uracil and 5-phospho-alpha-D-ribose 1-diphosphate (PRPP) to UMP and diphosphate. The polypeptide is Uracil phosphoribosyltransferase (Pyrobaculum islandicum (strain DSM 4184 / JCM 9189 / GEO3)).